The chain runs to 678 residues: MRRCPCRGSLSEAEAGALPAEARMGLEALRGGRRRQPGLQRPGPGAGGPTGRPEGGGPRAWIEESSLHSEAERTDLEPAPCPNGPQAESCGDGHAECEAAGLVVASEKPRQNKELDGSNLQTHPRRNSPLVEMEMAGSWTDGFRTDLHRSDLQSRPKRASLCTQPGFDESWTELDRSDMWQTLPERDNKPRVDNLRTHHGVSKLQTHPVCLSPESSADNSGKELSADASRTPHDTDGFWIESQTDDSLKGPSTQTACRQPGSDGFSSKDTESALTQPGTDGLRDDSVLGESNGNDPLDLSEPGELVTNLCSHLECSSLCPVPRLIITPETPEPEAQPVGPQSRIEGGTGGFSSASSFDESEDDLVAGGGGTSDPEDRAGSKPWKKLKTVLKYSPFVVSFHKHYYPWVQLSGHAGNFQAGEDGRILKRFCQCEQRSLELLMGDPLRPFVPAYYGMVQRDGQAFNQMEDLLADFEGPSIMDCKMGSRTYLEEELVKARERPKPRKDMYEKMVAVDPGAPTPEEHAQGAITKPRYMQWRETLSSTSTLGFRIEGIKKADGTCNTNFKKTQALEQVTKVLEDFVNGDLGILRKYVARLEDLRETLENSPFFKTHEVVGSSLLFVHDHTGLAKVWMIDFGKTVALPDHQMLSHRLPWTEGNREDGYLWGLDNLICLLQGLAQS.

2 disordered regions span residues 26–128 (LEAL…RRNS) and 151–300 (DLQS…LDLS). Residues 44-58 (PGAGGPTGRPEGGGP) are compositionally biased toward gly residues. Basic and acidic residues-rich tracts occupy residues 61-76 (WIEESSLHSEAERTDL) and 107-116 (EKPRQNKELD). The residue at position 160 (S160) is a Phosphoserine. Basic and acidic residues-rich tracts occupy residues 173–196 (ELDRSDMWQTLPERDNKPRVDNLR) and 220–236 (SGKELSADASRTPHDTD). Residues 318-326 (LCPVPRLII) carry the Nuclear export signal motif. The disordered stretch occupies residues 328–380 (PETPEPEAQPVGPQSRIEGGTGGFSSASSFDESEDDLVAGGGGTSDPEDRAGS). T330 bears the Phosphothreonine mark. Residue S398 is modified to Phosphoserine. ATP-binding positions include K426, 466-468 (EDL), and D479. Residues K481, 502-508 (RKDMYEK), and 529-536 (KPRYMQWR) each bind substrate. The interval 504 to 512 (DMYEKMVAV) is calmodulin-binding. ATP-binding residues include K553 and D633. K636 lines the substrate pocket.

The protein belongs to the inositol phosphokinase (IPK) family.

It localises to the nucleus. The protein resides in the cytoplasm. The enzyme catalyses 1D-myo-inositol 1,4,5-trisphosphate + ATP = 1D-myo-inositol 1,3,4,5-tetrakisphosphate + ADP + H(+). Activated by calcium/calmodulin. Inhibited by high concentrations of the substrate Ins(1,2,4)P3, and allosterically activated by the product Ins(1,3,4,5)P4. Its function is as follows. Catalyzes the phosphorylation of 1D-myo-inositol 1,4,5-trisphosphate (InsP3) into 1D-myo-inositol 1,3,4,5-tetrakisphosphate and participates to the regulation of calcium homeostasis. Can phosphorylate inositol 2,4,5-triphosphate to inositol 2,4,5,6-tetraphosphate. The chain is Inositol-trisphosphate 3-kinase C (Itpkc) from Mus musculus (Mouse).